We begin with the raw amino-acid sequence, 104 residues long: Large ribosomal subunit protein uL24 (104 aa).

The protein belongs to the universal ribosomal protein uL24 family. In terms of assembly, part of the 50S ribosomal subunit.

In terms of biological role, one of two assembly initiator proteins, it binds directly to the 5'-end of the 23S rRNA, where it nucleates assembly of the 50S subunit. Its function is as follows. One of the proteins that surrounds the polypeptide exit tunnel on the outside of the subunit. The protein is Large ribosomal subunit protein uL24 of Treponema denticola (strain ATCC 35405 / DSM 14222 / CIP 103919 / JCM 8153 / KCTC 15104).